We begin with the raw amino-acid sequence, 377 residues long: Histidine protein methyltransferase 1 (377 aa).

Belongs to the methyltransferase superfamily. METTL18 family.

It localises to the cytoplasm. The protein resides in the nucleus. The catalysed reaction is L-histidyl-[protein] + S-adenosyl-L-methionine = N(tele)-methyl-L-histidyl-[protein] + S-adenosyl-L-homocysteine + H(+). Its function is as follows. Protein-histidine N-methyltransferase that mediates methylation of RPL3 at 'His-243'. Methylates ribosome-associated RPL3, but not free RPL3, thereby regulating 60S subunit assembly. In addition to RPL3, mediates His methylation of other proteins. The protein is Histidine protein methyltransferase 1 of Saccharomyces cerevisiae (strain ATCC 204508 / S288c) (Baker's yeast).